Here is a 146-residue protein sequence, read N- to C-terminus: MCMKLKTITAAMLFGCLCAGAVYAAGEVEKREGMMKQIGGSMGALAAISKGEKPFDAAAVKAAVTTISTNAKAFPDQFPVGSETGSAAAPAIWENFDDFKAKAAKLGTDADAVLANLPTDQAGVATAMKTLGADCGTCHQTYRLKK.

The signal sequence occupies residues 1-24 (MCMKLKTITAAMLFGCLCAGAVYA). Heme c-binding residues include methionine 35, cysteine 135, cysteine 138, and histidine 139.

In terms of assembly, monomer. In terms of processing, binds 1 heme c group covalently per subunit.

Functionally, low-spin monoheme cytochrome c. This is Cytochrome c-556 from Agrobacterium fabrum (strain C58 / ATCC 33970) (Agrobacterium tumefaciens (strain C58)).